We begin with the raw amino-acid sequence, 260 residues long: uncharacterized protein (260 aa).

This is an uncharacterized protein from Caenorhabditis elegans.